We begin with the raw amino-acid sequence, 65 residues long: Vespid chemotactic peptide 5h (65 aa).

A signal peptide spans 1 to 23 (MKYNIVFLFAIIASLACLQLTFA). AXPX repeat units follow at residues 23 to 26 (AAPA), 27 to 30 (ASPL), 31 to 34 (ANPG), 35 to 38 (ASPD), 39 to 42 (AAPN), 43 to 46 (ADPL), and 47 to 50 (ADPF). Positions 24–49 (APAASPLANPGASPDAAPNADPLADP) are excised as a propeptide. Leu-62 carries the post-translational modification Leucine amide.

This sequence belongs to the MCD family. Crabrolin subfamily. As to expression, expressed by the venom gland.

The protein localises to the secreted. Shows antimicrobial activity against the Gram-negative bacteria E.coli ATCC 25922 (MIC=30 ug/ml), the Gram-positive bacteria S.aureus ATCC 2592 (MIC=5 ug/ml) and the fungus C.albicans ATCC 2002 (MIC=25 ug/ml). Acts as a mast cell degranulating peptide. Its mast cell degranulation activity may be related to the activation of G-protein coupled receptors in mast cells as well as interaction with other proteins located in cell endosomal membranes in the mast cells. Induces the chemotaxis of neutrophils. This is Vespid chemotactic peptide 5h from Vespa magnifica (Hornet).